Reading from the N-terminus, the 206-residue chain is dITP/XTP pyrophosphatase (206 aa).

10–15 provides a ligand contact to substrate; that stretch reads SRNAKK. Residue D75 is the Proton acceptor of the active site. Residue D75 coordinates Mg(2+). Substrate-binding positions include S76, 158–161, K181, and 186–187; these read FGYD and HR.

This sequence belongs to the HAM1 NTPase family. In terms of assembly, homodimer. Requires Mg(2+) as cofactor.

It catalyses the reaction XTP + H2O = XMP + diphosphate + H(+). It carries out the reaction dITP + H2O = dIMP + diphosphate + H(+). The enzyme catalyses ITP + H2O = IMP + diphosphate + H(+). In terms of biological role, pyrophosphatase that catalyzes the hydrolysis of nucleoside triphosphates to their monophosphate derivatives, with a high preference for the non-canonical purine nucleotides XTP (xanthosine triphosphate), dITP (deoxyinosine triphosphate) and ITP. Seems to function as a house-cleaning enzyme that removes non-canonical purine nucleotides from the nucleotide pool, thus preventing their incorporation into DNA/RNA and avoiding chromosomal lesions. The chain is dITP/XTP pyrophosphatase from Nocardia farcinica (strain IFM 10152).